Here is a 676-residue protein sequence, read N- to C-terminus: Palmitoyl-CoA ligase FUM16 (676 aa).

Residue I245–N256 coordinates AMP. The interval K552 to L655 is AMP-binding.

This sequence belongs to the ATP-dependent AMP-binding enzyme family.

The protein localises to the endoplasmic reticulum. The protein operates within mycotoxin biosynthesis. In terms of biological role, palmitoyl-CoA ligase; part of the gene cluster that mediates the biosynthesis of fumonisins B1 (FB1), B2 (FB2), B3 (FB3), and B4 (FB4), which are carcinogenic mycotoxins. Plays a role in the synthesis of ceramide and is involved in self-protection from fumonisin B1 toxicity. The biosynthesis starts with the FUM1-catalyzed carbon chain assembly from one molecule of acetyl-CoA, eight molecules of malonyl-CoA, and two molecules of methionine (in S-adenosyl form). The C18 polyketide chain is released from the enzyme by a nucleophilic attack of a carbanion, which is derived from R-carbon of alanine by decarboxylation, on the carbonyl carbon of polyketide acyl chain. This step is catalyzed by the pyridoxal 5'-phosphate-dependent aminoacyl transferase FUM8. The resultant 3-keto intermediate is then stereospecifically reduced to a 3-hydroxyl product by reductase FUM13. Subsequent oxidations at C-10 by the cytochrome P450 monooxygenase FUM2, C-14 and C-15 by FUM6, FUM12 or FUM15, tricarballylic esterification of the hydroxyl groups on C-14 and C-15 by acyltransferase FUM14, and C-5 hydroxylation by 2-keto-glutarate-dependent dioxygenase FUM3 furnish the biosynthesis of fumonisins. The tricarballylic moieties are most likely derived from the citric acid cycle, and their addition to the carbon backbone may involve FUM7, FUM10, FUM11 and FUM14. The polypeptide is Palmitoyl-CoA ligase FUM16 (Gibberella moniliformis (strain M3125 / FGSC 7600) (Maize ear and stalk rot fungus)).